A 450-amino-acid polypeptide reads, in one-letter code: Runt-related transcription factor 1 (450 aa).

Residues Met1–Met25 form a disordered region. The span at Ala7–Leu20 shows a compositional bias: polar residues. Phosphothreonine is present on Thr14. Ser21 bears the Phosphoserine mark. 2 positions are modified to N6-acetyllysine: Lys24 and Lys43. The 129-residue stretch at Ser50 to Arg178 folds into the Runt domain. Residues Arg80–Thr84 are interaction with DNA. 4 residues coordinate chloride: Asn112, Glu116, Arg139, and Val170. Interaction with DNA regions lie at residues Arg135 to Gly143 and Ile168 to Arg177. 2 disordered regions span residues Val170–Ser195 and Met209–Trp252. Phosphoserine is present on residues Ser193 and Ser212. Polar residues predominate over residues Pro222–Gln247. Ser249 is modified (phosphoserine; by HIPK2). 2 positions are modified to phosphoserine: Ser266 and Ser267. Residue Thr272 is modified to Phosphothreonine; by HIPK2. Ser275 is subject to Phosphoserine; by HIPK2. The interval Ser290 to Thr369 is interaction with KAT6A. At Thr295 the chain carries Phosphothreonine. The tract at residues Arg306–Arg398 is interaction with KAT6B. The interaction with FOXP3 stretch occupies residues Ser360 to Leu400. The disordered stretch occupies residues Ala410–Tyr450. Residues Ser416–Thr435 show a composition bias toward polar residues. Position 433 is a phosphoserine (Ser433). Residues Arg441–Tyr450 show a composition bias toward basic and acidic residues.

As to quaternary structure, heterodimer with CBFB. RUNX1 binds DNA as a monomer and through the Runt domain. DNA-binding is increased by heterodimerization. Interacts with TLE1 and ALYREF/THOC4. Interacts with ELF1, ELF2 and SPI1. Interacts via its Runt domain with the ELF4 N-terminal region. Interaction with ELF2 isoform 2 (NERF-1a) may act to repress RUNX1-mediated transactivation. Interacts with KAT6A and KAT6B. Interacts with SUV39H1, leading to abrogation of transactivating and DNA-binding properties of RUNX1. Interacts with YAP1 and HIPK2. Interaction with CDK6 prevents myeloid differentiation, reducing its transcription transactivation activity. Found in a complex with PRMT5, RUNX1 and CBFB. Interacts with FOXP3. Interacts with TBX21. Interacts with DPF2. Phosphorylated in its C-terminus upon IL-6 treatment. Phosphorylation enhances interaction with KAT6A. In terms of processing, methylated. Post-translationally, phosphorylated in Ser-249 Thr-272 and Ser-275 by HIPK2 when associated with CBFB and DNA. This phosphorylation promotes subsequent EP300 phosphorylation. As to expression, expressed in skeletal muscle.

The protein localises to the nucleus. Its function is as follows. CBF binds to the core site, 5'-PYGPYGGT-3', of a number of enhancers and promoters, including murine leukemia virus, polyomavirus enhancer, T-cell receptor enhancers, LCK, IL-3 and GM-CSF promoters. The alpha subunit binds DNA and appears to have a role in the development of normal hematopoiesis. Isoform AML-1L interferes with the transactivation activity of RUNX1. Acts synergistically with ELF4 to transactivate the IL-3 promoter and with ELF2 to transactivate the BLK promoter. Inhibits KAT6B-dependent transcriptional activation. Controls the anergy and suppressive function of regulatory T-cells (Treg) by associating with FOXP3. Activates the expression of IL2 and IFNG and down-regulates the expression of TNFRSF18, IL2RA and CTLA4, in conventional T-cells. Positively regulates the expression of RORC in T-helper 17 cells. In Rattus norvegicus (Rat), this protein is Runt-related transcription factor 1 (Runx1).